We begin with the raw amino-acid sequence, 478 residues long: Secretogranin-3 (478 aa).

An N-terminal signal peptide occupies residues 1-21; sequence MASKRLGFVVVLALVCQHINA. 2 disordered regions span residues 22–126 and 208–287; these read FPTP…NGMD and IGDR…EDGL. Residues 28 to 42 show a composition bias toward basic and acidic residues; sequence PDDKYNRELTEEKPL. Positions 63–74 are enriched in acidic residues; that stretch reads AEEETNSEDDDI. Positions 97 to 120 are enriched in basic and acidic residues; the sequence is ANERLGADDTDSTKNRRLADDYDS. Residues 235–259 show a composition bias toward acidic residues; the sequence is DEEDEVENEGGDDANGDEPQEEESR.

It localises to the cytoplasmic vesicle. The protein resides in the secretory vesicle lumen. Its subcellular location is the secretory vesicle membrane. The protein localises to the secreted. In Danio rerio (Zebrafish), this protein is Secretogranin-3 (scg3).